We begin with the raw amino-acid sequence, 338 residues long: GTPase Obg (338 aa).

Residues 1–159 (MSFIDEVKIN…RWIRMELKLM (159 aa)) enclose the Obg domain. The disordered stretch occupies residues 58 to 79 (DLRQHPHQKAGRGKNGMGSDRH). An OBG-type G domain is found at 160–331 (ADVGLLGMPS…LLDDIAFNLW (172 aa)). GTP-binding positions include 166–173 (GMPSVGKS), 191–195 (FTTLK), 213–216 (DIPG), 283–286 (NKID), and 312–314 (SAA). Mg(2+) contacts are provided by Ser173 and Thr193.

It belongs to the TRAFAC class OBG-HflX-like GTPase superfamily. OBG GTPase family. As to quaternary structure, monomer. Mg(2+) is required as a cofactor.

The protein localises to the cytoplasm. In terms of biological role, an essential GTPase which binds GTP, GDP and possibly (p)ppGpp with moderate affinity, with high nucleotide exchange rates and a fairly low GTP hydrolysis rate. Plays a role in control of the cell cycle, stress response, ribosome biogenesis and in those bacteria that undergo differentiation, in morphogenesis control. The protein is GTPase Obg of Citrifermentans bemidjiense (strain ATCC BAA-1014 / DSM 16622 / JCM 12645 / Bem) (Geobacter bemidjiensis).